We begin with the raw amino-acid sequence, 92 residues long: Small ribosomal subunit protein bS18 (92 aa).

The protein belongs to the bacterial ribosomal protein bS18 family. Part of the 30S ribosomal subunit. Forms a tight heterodimer with protein bS6.

Functionally, binds as a heterodimer with protein bS6 to the central domain of the 16S rRNA, where it helps stabilize the platform of the 30S subunit. The polypeptide is Small ribosomal subunit protein bS18 (Caulobacter sp. (strain K31)).